The primary structure comprises 103 residues: Enhancer of rudimentary homolog (103 aa).

This sequence belongs to the E(R) family. Homodimer.

May have a role in the cell cycle. This chain is Enhancer of rudimentary homolog, found in Aedes aegypti (Yellowfever mosquito).